The primary structure comprises 219 residues: Izumo sperm-egg fusion protein 4 (219 aa).

A signal peptide spans 1-15; it reads MALLLCLVGVTAALA. The N-linked (GlcNAc...) asparagine glycan is linked to asparagine 206.

This sequence belongs to the Izumo family.

It is found in the secreted. In Macaca fascicularis (Crab-eating macaque), this protein is Izumo sperm-egg fusion protein 4 (IZUMO4).